Here is a 656-residue protein sequence, read N- to C-terminus: Macrolide export ATP-binding/permease protein MacB (656 aa).

The region spanning 20-258 is the ABC transporter domain; the sequence is IELAGITRSF…EPDFAPHVDR (239 aa). 56-63 contacts ATP; the sequence is GASGSGKS. Transmembrane regions (helical) follow at residues 284–304, 531–551, 591–611, and 619–639; these read ALTL…LAIG, LTIL…IGVM, ALGG…IALF, and LLPV…FGYL.

It belongs to the ABC transporter superfamily. Macrolide exporter (TC 3.A.1.122) family. Homodimer.

The protein localises to the cell inner membrane. Its function is as follows. Non-canonical ABC transporter that contains transmembrane domains (TMD), which form a pore in the inner membrane, and an ATP-binding domain (NBD), which is responsible for energy generation. Confers resistance against macrolides. The protein is Macrolide export ATP-binding/permease protein MacB of Azoarcus sp. (strain BH72).